The chain runs to 234 residues: Large ribosomal subunit protein uL1c (234 aa).

It belongs to the universal ribosomal protein uL1 family. As to quaternary structure, part of the 50S ribosomal subunit.

It localises to the plastid. Its subcellular location is the chloroplast. Its function is as follows. Binds directly to 23S rRNA. Might be involved in E site tRNA release (Potential). This Rhodomonas salina (Cryptomonas salina) protein is Large ribosomal subunit protein uL1c (rpl1).